The primary structure comprises 236 residues: Probable glutathione S-transferase BZ2 (236 aa).

One can recognise a GST N-terminal domain in the interval 1–80 (MRVLGGEVSP…YIEDVARESG (80 aa)). Glutathione is bound by residues serine 9, lysine 37, isoleucine 51, and 64–65 (ES). One can recognise a GST C-terminal domain in the interval 92–221 (DPYERAMHRF…LPDTEKVVQF (130 aa)).

It belongs to the GST superfamily. HSP26 family.

The enzyme catalyses RX + glutathione = an S-substituted glutathione + a halide anion + H(+). The protein operates within pigment biosynthesis; anthocyanin biosynthesis. The sequence is that of Probable glutathione S-transferase BZ2 (BZ2) from Zea mays (Maize).